Consider the following 393-residue polypeptide: Pyrimidine monooxygenase RutA (393 aa).

FMN-binding positions include 79-80 (IK), asparagine 145, glutamate 154, 170-171 (RY), and serine 220.

It belongs to the NtaA/SnaA/DszA monooxygenase family. RutA subfamily.

It carries out the reaction uracil + FMNH2 + NADH + O2 = (Z)-3-ureidoacrylate + FMN + NAD(+) + H2O + H(+). The enzyme catalyses thymine + FMNH2 + NADH + O2 = (Z)-2-methylureidoacrylate + FMN + NAD(+) + H2O + H(+). Functionally, catalyzes the pyrimidine ring opening between N-3 and C-4 by an unusual flavin hydroperoxide-catalyzed mechanism, adding oxygen atoms in the process to yield ureidoacrylate peracid, that immediately reacts with FMN forming ureidoacrylate and FMN-N(5)-oxide. The FMN-N(5)-oxide reacts spontaneously with NADH to produce FMN. Requires the flavin reductase RutF to regenerate FMN in vivo. This Escherichia coli O139:H28 (strain E24377A / ETEC) protein is Pyrimidine monooxygenase RutA.